The following is a 320-amino-acid chain: UDP-N-acetylenolpyruvoylglucosamine reductase (320 aa).

One can recognise an FAD-binding PCMH-type domain in the interval 34-200 (RAGGLAEVFF…TSAVFEGFAE (167 aa)). Arginine 180 is an active-site residue. The active-site Proton donor is serine 229. Residue glutamate 299 is part of the active site.

The protein belongs to the MurB family. It depends on FAD as a cofactor.

The protein localises to the cytoplasm. It catalyses the reaction UDP-N-acetyl-alpha-D-muramate + NADP(+) = UDP-N-acetyl-3-O-(1-carboxyvinyl)-alpha-D-glucosamine + NADPH + H(+). It participates in cell wall biogenesis; peptidoglycan biosynthesis. Cell wall formation. This Mesorhizobium japonicum (strain LMG 29417 / CECT 9101 / MAFF 303099) (Mesorhizobium loti (strain MAFF 303099)) protein is UDP-N-acetylenolpyruvoylglucosamine reductase.